Consider the following 161-residue polypeptide: Large-conductance mechanosensitive channel (161 aa).

Helical transmembrane passes span 14–34 and 85–105; these read VVDM…VNTL and GLFL…FILV.

Belongs to the MscL family. As to quaternary structure, homopentamer.

Its subcellular location is the cell inner membrane. Its function is as follows. Channel that opens in response to stretch forces in the membrane lipid bilayer. May participate in the regulation of osmotic pressure changes within the cell. This Chlorobium luteolum (strain DSM 273 / BCRC 81028 / 2530) (Pelodictyon luteolum) protein is Large-conductance mechanosensitive channel.